The sequence spans 447 residues: GTPase Der (447 aa).

EngA-type G domains are found at residues 3 to 167 (PVIA…HLAD) and 180 to 353 (IRLA…ASAN). GTP-binding positions include 9–16 (GRPNVGKS), 56–60 (DTGGF), 119–122 (NKAE), 186–193 (GRPNVGKS), 233–237 (DTAGL), and 298–301 (NKWD). The KH-like domain occupies 354 to 438 (RKMSTPVLTR…PMRIQMKSSH (85 aa)).

Belongs to the TRAFAC class TrmE-Era-EngA-EngB-Septin-like GTPase superfamily. EngA (Der) GTPase family. As to quaternary structure, associates with the 50S ribosomal subunit.

In terms of biological role, GTPase that plays an essential role in the late steps of ribosome biogenesis. The polypeptide is GTPase Der (Polaromonas sp. (strain JS666 / ATCC BAA-500)).